A 244-amino-acid polypeptide reads, in one-letter code: MAQWWLILLGLWTVLPSLAGGKLLNVCMNSKHHKQEPGPEDKLYFECMPWKDNACCTRDTSWEAHLDEPLLFNFSMTHCGLLTPLCHKHFIQAICFYECSPNLGPWIQPVVPNRQEEQRLWDVPLCLEDCEEWWKDCRTSHTCKADWLHGWVWDQGKNGCPAHAPCLPFSDYFPTPADLCEKIWNNTFKASPERRNSGRCLQKWFEPTHGNPNVEVALHFAGSASAPQLSYSITAFSLCLLLHA.

Positions 1 to 19 are cleaved as a signal peptide; the sequence is MAQWWLILLGLWTVLPSLA. Intrachain disulfides connect cysteine 27/cysteine 55, cysteine 47/cysteine 95, cysteine 56/cysteine 99, cysteine 79/cysteine 166, cysteine 86/cysteine 137, cysteine 126/cysteine 200, cysteine 130/cysteine 180, and cysteine 143/cysteine 160. An important for interaction with IZUMO1 region spans residues 62–81; sequence WEAHLDEPLLFNFSMTHCGL. Asparagine 73 carries N-linked (GlcNAc...) asparagine glycosylation. The propeptide occupies 223–244; the sequence is SASAPQLSYSITAFSLCLLLHA.

It belongs to the folate receptor family. In terms of assembly, monomer. Interacts with IZUMO1; the interaction is direct. IZUMO1 and IZUMO1R/JUNO form a complex with 1:1 stoichiometry. Interacts with FCRL3/MAIA; FCRL3/MAIA replaces IZUMO1R/JUNO as IZUMO1 receptor after sperm-egg adhesion, thereby permitting species-specific gamete fusion. Interacts with WDR54. The protein is rapidly cleaved following fertilization, being only weakly detectable in zona-intact fertilized eggs at telophase II and undetectable at the pronuclear stage. Sheding is probably required to block to polyspermy and ensuring egg fusion with a single sperm. Expressed in the oocyte (at protein level).

It is found in the cell membrane. The protein resides in the cell projection. The protein localises to the microvillus membrane. Its function is as follows. Receptor for IZUMO1 present at the cell surface of oocytes (oolemma), which is essential for species-specific gamete recognition and fertilization. The IZUMO1:IZUMO1R/JUNO interaction is a necessary adhesion event between sperm and egg that is required for fertilization but is not sufficient for cell fusion. The ligand-receptor interaction probably does not act as a membrane 'fusogen'. Does not bind folate. The protein is Sperm-egg fusion protein Juno (Izumo1r) of Rattus norvegicus (Rat).